The sequence spans 421 residues: Tol-Pal system protein TolB (421 aa).

Positions 1–16 (MRILVFLWLGLSSLFA) are cleaved as a signal peptide.

This sequence belongs to the TolB family. As to quaternary structure, the Tol-Pal system is composed of five core proteins: the inner membrane proteins TolA, TolQ and TolR, the periplasmic protein TolB and the outer membrane protein Pal. They form a network linking the inner and outer membranes and the peptidoglycan layer.

It is found in the periplasm. Part of the Tol-Pal system, which plays a role in outer membrane invagination during cell division and is important for maintaining outer membrane integrity. This Wolinella succinogenes (strain ATCC 29543 / DSM 1740 / CCUG 13145 / JCM 31913 / LMG 7466 / NCTC 11488 / FDC 602W) (Vibrio succinogenes) protein is Tol-Pal system protein TolB.